A 219-amino-acid polypeptide reads, in one-letter code: ATP phosphoribosyltransferase (219 aa).

The protein belongs to the ATP phosphoribosyltransferase family. Short subfamily. In terms of assembly, heteromultimer composed of HisG and HisZ subunits.

The protein resides in the cytoplasm. The enzyme catalyses 1-(5-phospho-beta-D-ribosyl)-ATP + diphosphate = 5-phospho-alpha-D-ribose 1-diphosphate + ATP. The protein operates within amino-acid biosynthesis; L-histidine biosynthesis; L-histidine from 5-phospho-alpha-D-ribose 1-diphosphate: step 1/9. In terms of biological role, catalyzes the condensation of ATP and 5-phosphoribose 1-diphosphate to form N'-(5'-phosphoribosyl)-ATP (PR-ATP). Has a crucial role in the pathway because the rate of histidine biosynthesis seems to be controlled primarily by regulation of HisG enzymatic activity. The protein is ATP phosphoribosyltransferase of Paramagnetospirillum magneticum (strain ATCC 700264 / AMB-1) (Magnetospirillum magneticum).